A 166-amino-acid polypeptide reads, in one-letter code: Lipoprotein signal peptidase (166 aa).

Transmembrane regions (helical) follow at residues 12–32, 70–90, and 102–122; these read WLWL…LILQ, WFFA…MYRS, and ALII…GFVV. Active-site residues include Asp123 and Asp141. The chain crosses the membrane as a helical span at residues 137–157; sequence FNLADTAICIGAALIVLEGFL.

The protein belongs to the peptidase A8 family.

Its subcellular location is the cell inner membrane. It carries out the reaction Release of signal peptides from bacterial membrane prolipoproteins. Hydrolyzes -Xaa-Yaa-Zaa-|-(S,diacylglyceryl)Cys-, in which Xaa is hydrophobic (preferably Leu), and Yaa (Ala or Ser) and Zaa (Gly or Ala) have small, neutral side chains.. It participates in protein modification; lipoprotein biosynthesis (signal peptide cleavage). Its function is as follows. This protein specifically catalyzes the removal of signal peptides from prolipoproteins. This chain is Lipoprotein signal peptidase, found in Salmonella typhi.